The following is a 364-amino-acid chain: GTPase Obg (364 aa).

The region spanning 1 to 159 (MKFVDEAYID…KSLKLELKVL (159 aa)) is the Obg domain. The OBG-type G domain occupies 160 to 334 (ADVGLLGMPN…LVKTIYQHVK (175 aa)). GTP is bound by residues 166-173 (GMPNAGKS), 191-195 (FTTLH), 213-216 (DLPG), 284-287 (NKLD), and 315-317 (SAL). The Mg(2+) site is built by serine 173 and threonine 193. Residues 337-364 (QKSEQPEEEVDPRFIELPPEPAKPASSD) are disordered.

It belongs to the TRAFAC class OBG-HflX-like GTPase superfamily. OBG GTPase family. In terms of assembly, monomer. The cofactor is Mg(2+).

It is found in the cytoplasm. In terms of biological role, an essential GTPase which binds GTP, GDP and possibly (p)ppGpp with moderate affinity, with high nucleotide exchange rates and a fairly low GTP hydrolysis rate. Plays a role in control of the cell cycle, stress response, ribosome biogenesis and in those bacteria that undergo differentiation, in morphogenesis control. The chain is GTPase Obg from Polaromonas naphthalenivorans (strain CJ2).